Here is a 383-residue protein sequence, read N- to C-terminus: Chitinase-3-like protein 1 (383 aa).

The N-terminal stretch at 1 to 21 is a signal peptide; that stretch reads MGLRVAQTGFVALVLLQSCAA. The GH18 domain maps to 22 to 383; it reads YKLVCYYTSW…SAIKDVLAAA (362 aa). A disulfide bridge links Cys26 with Cys51. An N-linked (GlcNAc...) asparagine glycan is attached at Asn60. Chitin is bound by residues 70-71, 97-100, Tyr141, 204-207, and Arg263; these read EW, GGWN, and LTYD. An intrachain disulfide couples Cys300 to Cys364. An important for AKT1 activation and IL8 production region spans residues 324-338; sequence QWVGYDDQESVKNKA. Trp352 lines the chitin pocket.

Belongs to the glycosyl hydrolase 18 family. As to quaternary structure, monomer. Detected in smooth muscle cells in atherosclerotic plaques. Detected in regions of vascular occlusion in the aorta.

It is found in the secreted. It localises to the extracellular space. The protein localises to the cytoplasm. The protein resides in the perinuclear region. Its subcellular location is the endoplasmic reticulum. In terms of biological role, carbohydrate-binding lectin with a preference for chitin. Has no chitinase activity. May play a role in tissue remodeling and in the capacity of cells to respond to and cope with changes in their environment. Plays a role in T-helper cell type 2 (Th2) inflammatory response and IL-13-induced inflammation, regulating allergen sensitization, inflammatory cell apoptosis, dendritic cell accumulation and M2 macrophage differentiation. Facilitates invasion of pathogenic enteric bacteria into colonic mucosa and lymphoid organs. Mediates activation of AKT1 signaling pathway and subsequent IL8 production in colonic epithelial cells. Regulates antibacterial responses in lung by contributing to macrophage bacterial killing, controlling bacterial dissemination and augmenting host tolerance. Also regulates hyperoxia-induced injury, inflammation and epithelial apoptosis in lung. Stimulates migration and adhesion of cultured vascular smooth muscle cells. The chain is Chitinase-3-like protein 1 (CHI3L1) from Sus scrofa (Pig).